We begin with the raw amino-acid sequence, 130 residues long: Small ribosomal subunit protein uS8 (130 aa).

It belongs to the universal ribosomal protein uS8 family. Part of the 30S ribosomal subunit. Contacts proteins S5 and S12.

In terms of biological role, one of the primary rRNA binding proteins, it binds directly to 16S rRNA central domain where it helps coordinate assembly of the platform of the 30S subunit. This chain is Small ribosomal subunit protein uS8, found in Alteromonas mediterranea (strain DSM 17117 / CIP 110805 / LMG 28347 / Deep ecotype).